Here is a 526-residue protein sequence, read N- to C-terminus: NAD(P)H-quinone oxidoreductase subunit 2 (526 aa).

The next 14 membrane-spanning stretches (helical) occupy residues 16 to 36 (ILPESIVILTLIVVLVGDLIV), 43 to 63 (WIPYAAIAGLLGSVFALYLGW), 80 to 100 (LSILFRGIIVLSTAFTIMMSV), 107 to 127 (GTALSEFICILLTATLGGMFL), 133 to 153 (LVMIFVSLEMLSISSYLLTGY), 168 to 188 (LLIGAASSAIFLYGVSLLYGL), 211 to 231 (LALAIALVFAIAGIAFKISAV), 245 to 265 (PTPVVAFLSVGSKAAGFALAI), 279 to 299 (WHFIFTALAILSMVLGNVVAL), 307 to 327 (MLAYSSIAQAGFVMIGLVAGT), 335 to 355 (IFYLLVYLFMNLGAFTCVILF), 379 to 399 (LGLSVCLLSLGGIPPLAGFFG), 401 to 421 (IYLFWAGWQAGLYGLVLLGLI), and 469 to 489 (LVLSVIITSLAGILSNPLFVI).

This sequence belongs to the complex I subunit 2 family. NDH-1 can be composed of about 15 different subunits; different subcomplexes with different compositions have been identified which probably have different functions.

The protein localises to the cellular thylakoid membrane. The enzyme catalyses a plastoquinone + NADH + (n+1) H(+)(in) = a plastoquinol + NAD(+) + n H(+)(out). The catalysed reaction is a plastoquinone + NADPH + (n+1) H(+)(in) = a plastoquinol + NADP(+) + n H(+)(out). NDH-1 shuttles electrons from an unknown electron donor, via FMN and iron-sulfur (Fe-S) centers, to quinones in the respiratory and/or the photosynthetic chain. The immediate electron acceptor for the enzyme in this species is believed to be plastoquinone. Couples the redox reaction to proton translocation, and thus conserves the redox energy in a proton gradient. Cyanobacterial NDH-1 also plays a role in inorganic carbon-concentration. This chain is NAD(P)H-quinone oxidoreductase subunit 2, found in Picosynechococcus sp. (strain ATCC 27264 / PCC 7002 / PR-6) (Agmenellum quadruplicatum).